Here is a 208-residue protein sequence, read N- to C-terminus: Small ribosomal subunit protein uS5 (208 aa).

Residues 28–91 enclose the S5 DRBM domain; the sequence is LEERLIYANR…EKAKKNVIRV (64 aa).

It belongs to the universal ribosomal protein uS5 family. Part of the 30S ribosomal subunit. Contacts proteins S4 and S8.

Its function is as follows. With S4 and S12 plays an important role in translational accuracy. Located at the back of the 30S subunit body where it stabilizes the conformation of the head with respect to the body. In Aquifex aeolicus (strain VF5), this protein is Small ribosomal subunit protein uS5.